The sequence spans 313 residues: Synaptophysin (313 aa).

At methionine 1 to proline 25 the chain is on the cytoplasmic side. Residues valine 21–glycine 227 form the MARVEL domain. Residues leucine 26–glycine 49 traverse the membrane as a helical segment. Topologically, residues glutamate 50–phenylalanine 106 are vesicular. N-linked (GlcNAc...) asparagine glycosylation is present at asparagine 59. Tyrosine 81 bears the Phosphotyrosine mark. Residue asparagine 99 is glycosylated (N-linked (GlcNAc...) asparagine). Residues phenylalanine 107–asparagine 130 traverse the membrane as a helical segment. Residues lysine 131 to lysine 137 lie on the Cytoplasmic side of the membrane. The helical transmembrane segment at glycine 138 to alanine 161 threads the bilayer. The Vesicular portion of the chain corresponds to lysine 162–serine 199. The chain crosses the membrane as a helical span at residues glycine 200–phenylalanine 223. Topologically, residues lysine 224–methionine 313 are cytoplasmic. The tract at residues glycine 238 to methionine 313 is disordered. Positions alanine 253–glycine 263 are enriched in gly residues. The interval glycine 254–glycine 304 is repeats, Gly/Tyr-rich. The segment covering proline 264–serine 283 has biased composition (low complexity). Over residues serine 284 to proline 302 the composition is skewed to gly residues.

This sequence belongs to the synaptophysin/synaptobrevin family. As to quaternary structure, homohexamer or homotetramer. Interacts with SRCIN1. Interacts with VAMP2; the interaction is inhibited by interaction of VAPM2 with SEPT8. Post-translationally, ubiquitinated; mediated by SIAH1 or SIAH2 and leading to its subsequent proteasomal degradation. Phosphorylated by SRC. Characteristic of a type of small (30-80 nm) neurosecretory vesicles, including presynaptic vesicles, but also vesicles of various neuroendocrine cells of both neuronal and epithelial phenotype.

It is found in the cytoplasmic vesicle. The protein localises to the secretory vesicle. Its subcellular location is the synaptic vesicle membrane. The protein resides in the synapse. It localises to the synaptosome. Functionally, possibly involved in structural functions as organizing other membrane components or in targeting the vesicles to the plasma membrane. Involved in the regulation of short-term and long-term synaptic plasticity. This chain is Synaptophysin (SYP), found in Bos taurus (Bovine).